Reading from the N-terminus, the 343-residue chain is Dihydroorotase (343 aa).

Histidine 14 and histidine 16 together coordinate Zn(2+). Residues 16–18 (HLR) and asparagine 42 each bind substrate. 4 residues coordinate Zn(2+): lysine 97, histidine 136, histidine 170, and aspartate 242. An N6-carboxylysine modification is found at lysine 97. Histidine 136 is a substrate binding site. Aspartate 242 is an active-site residue. Positions 246 and 258 each coordinate substrate.

Belongs to the metallo-dependent hydrolases superfamily. DHOase family. Class II DHOase subfamily. Homodimer. Zn(2+) serves as cofactor.

It catalyses the reaction (S)-dihydroorotate + H2O = N-carbamoyl-L-aspartate + H(+). The protein operates within pyrimidine metabolism; UMP biosynthesis via de novo pathway; (S)-dihydroorotate from bicarbonate: step 3/3. Its function is as follows. Catalyzes the reversible cyclization of carbamoyl aspartate to dihydroorotate. The sequence is that of Dihydroorotase from Helicobacter hepaticus (strain ATCC 51449 / 3B1).